A 342-amino-acid polypeptide reads, in one-letter code: GTPase Obg (342 aa).

The 159-residue stretch at 1 to 159 (MQFIDQAQIE…KLLRLELKLL (159 aa)) folds into the Obg domain. Positions 160-330 (AEVGIIGLPN…MLQEVWGILD (171 aa)) constitute an OBG-type G domain. GTP contacts are provided by residues 166–173 (GLPNAGKS), 191–195 (FTTLI), 213–216 (DIPG), 280–283 (NKID), and 311–313 (SAV). Mg(2+) is bound by residues serine 173 and threonine 193.

This sequence belongs to the TRAFAC class OBG-HflX-like GTPase superfamily. OBG GTPase family. Monomer. Mg(2+) is required as a cofactor.

The protein localises to the cytoplasm. In terms of biological role, an essential GTPase which binds GTP, GDP and possibly (p)ppGpp with moderate affinity, with high nucleotide exchange rates and a fairly low GTP hydrolysis rate. Plays a role in control of the cell cycle, stress response, ribosome biogenesis and in those bacteria that undergo differentiation, in morphogenesis control. The chain is GTPase Obg from Nostoc sp. (strain PCC 7120 / SAG 25.82 / UTEX 2576).